The following is a 339-amino-acid chain: Anthranilate phosphoribosyltransferase (339 aa).

5-phospho-alpha-D-ribose 1-diphosphate contacts are provided by residues Gly-81, 84–85 (GD), Ser-89, 91–94 (NVSS), 109–117 (KHGNRALSS), and Ala-121. Gly-81 serves as a coordination point for anthranilate. Mg(2+) is bound at residue Ser-93. Residue Asn-112 coordinates anthranilate. Arg-167 lines the anthranilate pocket. Residues Asp-225 and Glu-226 each coordinate Mg(2+).

The protein belongs to the anthranilate phosphoribosyltransferase family. As to quaternary structure, homodimer. Requires Mg(2+) as cofactor.

The enzyme catalyses N-(5-phospho-beta-D-ribosyl)anthranilate + diphosphate = 5-phospho-alpha-D-ribose 1-diphosphate + anthranilate. It functions in the pathway amino-acid biosynthesis; L-tryptophan biosynthesis; L-tryptophan from chorismate: step 2/5. Catalyzes the transfer of the phosphoribosyl group of 5-phosphorylribose-1-pyrophosphate (PRPP) to anthranilate to yield N-(5'-phosphoribosyl)-anthranilate (PRA). The protein is Anthranilate phosphoribosyltransferase of Brucella ovis (strain ATCC 25840 / 63/290 / NCTC 10512).